Consider the following 146-residue polypeptide: Anti-sigma F factor (146 aa).

Belongs to the anti-sigma-factor family.

It carries out the reaction L-seryl-[protein] + ATP = O-phospho-L-seryl-[protein] + ADP + H(+). It catalyses the reaction L-threonyl-[protein] + ATP = O-phospho-L-threonyl-[protein] + ADP + H(+). In terms of biological role, binds to sigma F and blocks its ability to form an RNA polymerase holoenzyme (E-sigma F). Phosphorylates SpoIIAA on a serine residue. This phosphorylation may enable SpoIIAA to act as an anti-anti-sigma factor that counteracts SpoIIAB and thus releases sigma F from inhibition. This Bacillus anthracis (strain A0248) protein is Anti-sigma F factor.